Reading from the N-terminus, the 146-residue chain is D-aminoacyl-tRNA deacylase (146 aa).

The Gly-cisPro motif, important for rejection of L-amino acids signature appears at 137–138 (GP).

The protein belongs to the DTD family. Homodimer.

Its subcellular location is the cytoplasm. The catalysed reaction is glycyl-tRNA(Ala) + H2O = tRNA(Ala) + glycine + H(+). It catalyses the reaction a D-aminoacyl-tRNA + H2O = a tRNA + a D-alpha-amino acid + H(+). Its function is as follows. An aminoacyl-tRNA editing enzyme that deacylates mischarged D-aminoacyl-tRNAs. Also deacylates mischarged glycyl-tRNA(Ala), protecting cells against glycine mischarging by AlaRS. Acts via tRNA-based rather than protein-based catalysis; rejects L-amino acids rather than detecting D-amino acids in the active site. By recycling D-aminoacyl-tRNA to D-amino acids and free tRNA molecules, this enzyme counteracts the toxicity associated with the formation of D-aminoacyl-tRNA entities in vivo and helps enforce protein L-homochirality. This Deinococcus deserti (strain DSM 17065 / CIP 109153 / LMG 22923 / VCD115) protein is D-aminoacyl-tRNA deacylase.